Reading from the N-terminus, the 87-residue chain is Phosphoribosyl-ATP pyrophosphatase (87 aa).

This sequence belongs to the PRA-PH family.

It localises to the cytoplasm. It carries out the reaction 1-(5-phospho-beta-D-ribosyl)-ATP + H2O = 1-(5-phospho-beta-D-ribosyl)-5'-AMP + diphosphate + H(+). Its pathway is amino-acid biosynthesis; L-histidine biosynthesis; L-histidine from 5-phospho-alpha-D-ribose 1-diphosphate: step 2/9. The polypeptide is Phosphoribosyl-ATP pyrophosphatase (Bifidobacterium animalis subsp. lactis (strain AD011)).